A 461-amino-acid polypeptide reads, in one-letter code: Phosphomethylpyrimidine synthase (461 aa).

Residues Asn80, Met109, Tyr139, His174, 194 to 196 (SRG), 235 to 238 (DSLR), and Glu274 contribute to the substrate site. His278 lines the Zn(2+) pocket. Residue Tyr301 participates in substrate binding. His342 provides a ligand contact to Zn(2+). Positions 422, 425, and 430 each coordinate [4Fe-4S] cluster.

The protein belongs to the ThiC family. Homodimer. [4Fe-4S] cluster serves as cofactor.

It catalyses the reaction 5-amino-1-(5-phospho-beta-D-ribosyl)imidazole + S-adenosyl-L-methionine = 4-amino-2-methyl-5-(phosphooxymethyl)pyrimidine + CO + 5'-deoxyadenosine + formate + L-methionine + 3 H(+). The protein operates within cofactor biosynthesis; thiamine diphosphate biosynthesis. Catalyzes the synthesis of the hydroxymethylpyrimidine phosphate (HMP-P) moiety of thiamine from aminoimidazole ribotide (AIR) in a radical S-adenosyl-L-methionine (SAM)-dependent reaction. This chain is Phosphomethylpyrimidine synthase, found in Nautilia profundicola (strain ATCC BAA-1463 / DSM 18972 / AmH).